We begin with the raw amino-acid sequence, 244 residues long: Complement C1q subcomponent subunit A (244 aa).

Positions 1 to 22 (MEAPRGWLVISVLAISLASSVT) are cleaved as a signal peptide. The tract at residues 28–94 (APDGTHGSAG…PGPSGPMGPA (67 aa)) is disordered. The region spanning 31 to 109 (GTHGSAGIPG…KGTKGSPGNI (79 aa)) is the Collagen-like domain. 2 positions are modified to 4-hydroxyproline: P39 and P45. Residue K48 is modified to 5-hydroxylysine. K48 carries O-linked (Gal...) hydroxylysine glycosylation. A 4-hydroxyproline mark is found at P54 and P57. Residue K67 is modified to 5-hydroxylysine. K67 is a glycosylation site (O-linked (Gal...) hydroxylysine). A 4-hydroxyproline mark is found at P73, P79, and P85. A compositionally biased stretch (low complexity) spans 79–94 (PGRMGYPGPSGPMGPA). K100 bears the 5-hydroxylysine mark. K100 carries O-linked (Gal...) hydroxylysine glycosylation. Residues 110-244 (KDQPRPAFSA…FSGFLIFPSA (135 aa)) form the C1q domain. An N-linked (GlcNAc...) asparagine glycan is attached at N146. A disulfide bridge connects residues C172 and C189. Q198 lines the Ca(2+) pocket.

In terms of assembly, core component of the complement C1 complex, a calcium-dependent complex composed of 1 molecule of the C1Q subcomplex, 2 molecules of C1R and 2 molecules of C1S. The C1Q subcomplex is composed 18 subunits: 3 chains of C1QA, C1QB, and C1QC trimerize to form 6 collagen-like triple helices connected to six globular ligand-recognition modules (C1q domain). Interacts with CR1 (via Sushi 24 and Sushi 25 domains). Interacts (via C-terminus) with CD33; this interaction activates CD33 inhibitory motifs. In terms of processing, O-linked glycans are assumed to be the Glc-Gal disaccharides typically found as secondary modifications of hydroxylated lysines in collagen-like domains.

It is found in the secreted. The protein resides in the cell surface. The C1Q subcomplex is inhibited by sulfated molecules, such as triterpenoid sulfates, heparan sulfate, or chondroitin sulfates. Functionally, core component of the complement C1 complex, a multiprotein complex that initiates the classical pathway of the complement system, a cascade of proteins that leads to phagocytosis and breakdown of pathogens and signaling that strengthens the adaptive immune system. The classical complement pathway is initiated by the C1Q subcomplex of the C1 complex, which specifically binds IgG or IgM immunoglobulins complexed with antigens, forming antigen-antibody complexes on the surface of pathogens: C1QA, together with C1QB and C1QC, specifically recognizes and binds the Fc regions of IgG or IgM via its C1q domain. Immunoglobulin-binding activates the proenzyme C1R, which cleaves C1S, initiating the proteolytic cascade of the complement system. The C1Q subcomplex is activated by a hexamer of IgG complexed with antigens, while it is activated by a pentameric IgM. The C1Q subcomplex also recognizes and binds phosphatidylserine exposed on the surface of cells undergoing programmed cell death, possibly promoting activation of the complement system. This is Complement C1q subcomponent subunit A (C1QA) from Bos taurus (Bovine).